Consider the following 289-residue polypeptide: Phospholipase A1 (289 aa).

An N-terminal signal peptide occupies residues 1–20; sequence MRTGPGWLLAAAALPFFACA. The Periplasmic segment spans residues 21–52; that stretch reads QEATIDKVHDTPAVRGSIIANMLQEHDNPFTL. The beta stranded transmembrane segment at 53–65 threads the bilayer; sequence YPYESNYLLYTYT. Over 66–84 the chain is Extracellular; it reads SDLNKKAIESYNWSDNANK. The chain crosses the membrane as a beta stranded span at residues 85 to 99; sequence DEVKFQLSLAFPLWR. Residues 100 to 105 lie on the Periplasmic side of the membrane; it reads GILGDN. Residues 106–118 form a beta stranded membrane-spanning segment; that stretch reads SLLGASYTQRSWW. Residues 119–128 are Extracellular-facing; it reads QLSNTGESAP. S126 serves as a coordination point for Ca(2+). A beta stranded transmembrane segment spans residues 129–148; sequence FRETNYEPQLFLGFATDYSV. Topologically, residues 149 to 150 are periplasmic; it reads GD. Residues 151 to 164 form a beta stranded membrane-spanning segment; sequence WTLRDAEFGYNHQS. H162 functions as the Proton acceptor in the catalytic mechanism. S164 functions as the Nucleophile in the catalytic mechanism. Residues 165 to 173 are Extracellular-facing; it reads NGRSDPTSR. Ca(2+)-binding residues include R167 and S172. The beta stranded transmembrane segment at 174–186 threads the bilayer; it reads SWNRLYSRLMAQN. Residues 187–188 are Periplasmic-facing; the sequence is GN. Residues 189–198 traverse the membrane as a beta stranded segment; it reads WLVEVKPWYV. The Extracellular portion of the chain corresponds to 199–216; sequence IGDTSDNKNITKYMGYYQ. Position 204 (D204) interacts with Ca(2+). A beta stranded transmembrane segment spans residues 217-223; it reads LKIGYQL. Residues 224–225 are Periplasmic-facing; that stretch reads GE. A beta stranded membrane pass occupies residues 226–234; that stretch reads AVLSAKGQY. At 235-241 the chain is on the extracellular side; that stretch reads NWNTGYG. Residues 242 to 250 form a beta stranded membrane-spanning segment; sequence GAELGVSYP. Residues 251–255 are Periplasmic-facing; that stretch reads ITKHV. A beta stranded membrane pass occupies residues 256–265; sequence RFYTQVYSGY. The Extracellular portion of the chain corresponds to 266–274; that stretch reads GESLIDYDF. Residues 275 to 286 form a beta stranded membrane-spanning segment; that stretch reads NQTRVGMGVMLN. Topologically, residues 287 to 289 are periplasmic; that stretch reads DLF.

Belongs to the phospholipase A1 family. In terms of assembly, homodimer; dimerization is reversible, and the dimeric form is the active one. Ca(2+) is required as a cofactor.

It is found in the cell outer membrane. It carries out the reaction a 1,2-diacyl-sn-glycero-3-phosphocholine + H2O = a 2-acyl-sn-glycero-3-phosphocholine + a fatty acid + H(+). The enzyme catalyses a 1,2-diacyl-sn-glycero-3-phosphocholine + H2O = a 1-acyl-sn-glycero-3-phosphocholine + a fatty acid + H(+). Functionally, hydrolysis of phosphatidylcholine with phospholipase A2 (EC 3.1.1.4) and phospholipase A1 (EC 3.1.1.32) activities. This chain is Phospholipase A1 (pldA), found in Proteus vulgaris.